A 430-amino-acid chain; its full sequence is 3-phosphoshikimate 1-carboxyvinyltransferase (430 aa).

The 3-phosphoshikimate site is built by lysine 20, serine 21, and arginine 25. Phosphoenolpyruvate is bound at residue lysine 20. Phosphoenolpyruvate contacts are provided by glycine 92 and arginine 120. The 3-phosphoshikimate site is built by serine 166, glutamine 168, aspartate 312, and lysine 339. Residue glutamine 168 participates in phosphoenolpyruvate binding. Aspartate 312 serves as the catalytic Proton acceptor. Positions 343 and 387 each coordinate phosphoenolpyruvate.

The protein belongs to the EPSP synthase family. Monomer.

The protein resides in the cytoplasm. The enzyme catalyses 3-phosphoshikimate + phosphoenolpyruvate = 5-O-(1-carboxyvinyl)-3-phosphoshikimate + phosphate. Its pathway is metabolic intermediate biosynthesis; chorismate biosynthesis; chorismate from D-erythrose 4-phosphate and phosphoenolpyruvate: step 6/7. In terms of biological role, catalyzes the transfer of the enolpyruvyl moiety of phosphoenolpyruvate (PEP) to the 5-hydroxyl of shikimate-3-phosphate (S3P) to produce enolpyruvyl shikimate-3-phosphate and inorganic phosphate. This is 3-phosphoshikimate 1-carboxyvinyltransferase from Lactococcus lactis subsp. lactis (strain IL1403) (Streptococcus lactis).